A 321-amino-acid chain; its full sequence is Aspartate carbamoyltransferase catalytic subunit (321 aa).

Carbamoyl phosphate-binding residues include arginine 70 and threonine 71. Lysine 98 is a binding site for L-aspartate. Arginine 120, histidine 148, and glutamine 151 together coordinate carbamoyl phosphate. L-aspartate-binding residues include arginine 181 and arginine 235. The carbamoyl phosphate site is built by glycine 276 and proline 277.

This sequence belongs to the aspartate/ornithine carbamoyltransferase superfamily. ATCase family. In terms of assembly, heterododecamer (2C3:3R2) of six catalytic PyrB chains organized as two trimers (C3), and six regulatory PyrI chains organized as three dimers (R2).

The catalysed reaction is carbamoyl phosphate + L-aspartate = N-carbamoyl-L-aspartate + phosphate + H(+). It participates in pyrimidine metabolism; UMP biosynthesis via de novo pathway; (S)-dihydroorotate from bicarbonate: step 2/3. Functionally, catalyzes the condensation of carbamoyl phosphate and aspartate to form carbamoyl aspartate and inorganic phosphate, the committed step in the de novo pyrimidine nucleotide biosynthesis pathway. The protein is Aspartate carbamoyltransferase catalytic subunit of Gluconacetobacter diazotrophicus (strain ATCC 49037 / DSM 5601 / CCUG 37298 / CIP 103539 / LMG 7603 / PAl5).